We begin with the raw amino-acid sequence, 391 residues long: Chaperone protein DnaJ (391 aa).

A J domain is found at 4–68; it reads DFYDVLGVSR…ETRQQYDQLG (65 aa). Residues 53–79 are compositionally biased toward basic and acidic residues; that stretch reads DVLTDEETRQQYDQLGHERFEEAEKRG. Disordered regions lie at residues 53-94 and 117-136; these read DVLT…MGGA and FFGG…EQGR. Composition is skewed to gly residues over residues 81-94 and 119-129; these read TGNG…MGGA and GGAGGGGGRGR. Residues 152-234 form a CR-type zinc finger; that stretch reads GVSKQVTVRR…CGGQGQTRER (83 aa). Cys-165, Cys-168, Cys-182, Cys-185, Cys-208, Cys-211, Cys-222, and Cys-225 together coordinate Zn(2+). CXXCXGXG motif repeat units follow at residues 165-172, 182-189, 208-215, and 222-229; these read CADCGGSG, CPQCDGQG, CSRCGGEG, and CSTCGGQG.

This sequence belongs to the DnaJ family. Homodimer. Requires Zn(2+) as cofactor.

It is found in the cytoplasm. Functionally, participates actively in the response to hyperosmotic and heat shock by preventing the aggregation of stress-denatured proteins and by disaggregating proteins, also in an autonomous, DnaK-independent fashion. Unfolded proteins bind initially to DnaJ; upon interaction with the DnaJ-bound protein, DnaK hydrolyzes its bound ATP, resulting in the formation of a stable complex. GrpE releases ADP from DnaK; ATP binding to DnaK triggers the release of the substrate protein, thus completing the reaction cycle. Several rounds of ATP-dependent interactions between DnaJ, DnaK and GrpE are required for fully efficient folding. Also involved, together with DnaK and GrpE, in the DNA replication of plasmids through activation of initiation proteins. This is Chaperone protein DnaJ from Halobacterium salinarum (strain ATCC 29341 / DSM 671 / R1).